A 274-amino-acid chain; its full sequence is Large ribosomal subunit protein uL2 (274 aa).

Disordered stretches follow at residues 40 to 59 (SGGR…GGHK) and 223 to 274 (VAMN…RRSR). Composition is skewed to basic residues over residues 49–59 (VTRRHQGGGHK) and 256–274 (YRTR…RRSR).

Belongs to the universal ribosomal protein uL2 family. Part of the 50S ribosomal subunit. Forms a bridge to the 30S subunit in the 70S ribosome.

In terms of biological role, one of the primary rRNA binding proteins. Required for association of the 30S and 50S subunits to form the 70S ribosome, for tRNA binding and peptide bond formation. It has been suggested to have peptidyltransferase activity; this is somewhat controversial. Makes several contacts with the 16S rRNA in the 70S ribosome. The polypeptide is Large ribosomal subunit protein uL2 (Acidithiobacillus ferrooxidans (strain ATCC 23270 / DSM 14882 / CIP 104768 / NCIMB 8455) (Ferrobacillus ferrooxidans (strain ATCC 23270))).